The following is a 375-amino-acid chain: tRNA-specific 2-thiouridylase MnmA (375 aa).

ATP-binding positions include 7-14 (GLSGGVDS) and methionine 33. The interaction with target base in tRNA stretch occupies residues 102 to 104 (NPD). The active-site Nucleophile is cysteine 107. The cysteines at positions 107 and 205 are disulfide-linked. Glycine 132 is a binding site for ATP. Residues 155-157 (KDQ) are interaction with tRNA. Cysteine 205 serves as the catalytic Cysteine persulfide intermediate. The interaction with tRNA stretch occupies residues 313–314 (RY).

This sequence belongs to the MnmA/TRMU family.

It is found in the cytoplasm. It catalyses the reaction S-sulfanyl-L-cysteinyl-[protein] + uridine(34) in tRNA + AH2 + ATP = 2-thiouridine(34) in tRNA + L-cysteinyl-[protein] + A + AMP + diphosphate + H(+). In terms of biological role, catalyzes the 2-thiolation of uridine at the wobble position (U34) of tRNA, leading to the formation of s(2)U34. The sequence is that of tRNA-specific 2-thiouridylase MnmA from Phytoplasma australiense.